Consider the following 149-residue polypeptide: Transcriptional repressor NrdR (149 aa).

A zinc finger lies at 3-34 (CPFCSHLETQVIETRVFEDAASIRRRRQCAAC). One can recognise an ATP-cone domain in the interval 49 to 139 (PAVVKKDGRR…VYRSFEGIDD (91 aa)).

Belongs to the NrdR family. The cofactor is Zn(2+).

Functionally, negatively regulates transcription of bacterial ribonucleotide reductase nrd genes and operons by binding to NrdR-boxes. This is Transcriptional repressor NrdR from Verminephrobacter eiseniae (strain EF01-2).